The following is a 408-amino-acid chain: DNA replication and repair protein RecF (408 aa).

30 to 37 is an ATP binding site; that stretch reads GSNGQGKT. Disordered regions lie at residues 220 to 252 and 389 to 408; these read DHGPSARPELSILADDPGEDDVADETGARDGGR and SPTPASASEPASPGEDGGAA. Low complexity predominate over residues 389–402; that stretch reads SPTPASASEPASPG.

Belongs to the RecF family.

The protein localises to the cytoplasm. In terms of biological role, the RecF protein is involved in DNA metabolism; it is required for DNA replication and normal SOS inducibility. RecF binds preferentially to single-stranded, linear DNA. It also seems to bind ATP. This Clavibacter sepedonicus (Clavibacter michiganensis subsp. sepedonicus) protein is DNA replication and repair protein RecF.